The chain runs to 289 residues: ATP phosphoribosyltransferase (289 aa).

Belongs to the ATP phosphoribosyltransferase family. Long subfamily. Requires Mg(2+) as cofactor.

Its subcellular location is the cytoplasm. It catalyses the reaction 1-(5-phospho-beta-D-ribosyl)-ATP + diphosphate = 5-phospho-alpha-D-ribose 1-diphosphate + ATP. Its pathway is amino-acid biosynthesis; L-histidine biosynthesis; L-histidine from 5-phospho-alpha-D-ribose 1-diphosphate: step 1/9. Its activity is regulated as follows. Feedback inhibited by histidine. Catalyzes the condensation of ATP and 5-phosphoribose 1-diphosphate to form N'-(5'-phosphoribosyl)-ATP (PR-ATP). Has a crucial role in the pathway because the rate of histidine biosynthesis seems to be controlled primarily by regulation of HisG enzymatic activity. The protein is ATP phosphoribosyltransferase of Koribacter versatilis (strain Ellin345).